The primary structure comprises 143 residues: Nucleoside diphosphate kinase (143 aa).

ATP-binding residues include K11, F59, R87, T93, R104, and N114. H117 (pros-phosphohistidine intermediate) is an active-site residue.

Belongs to the NDK family. In terms of assembly, homotetramer. The cofactor is Mg(2+).

The protein resides in the cytoplasm. The enzyme catalyses a 2'-deoxyribonucleoside 5'-diphosphate + ATP = a 2'-deoxyribonucleoside 5'-triphosphate + ADP. The catalysed reaction is a ribonucleoside 5'-diphosphate + ATP = a ribonucleoside 5'-triphosphate + ADP. Its function is as follows. Major role in the synthesis of nucleoside triphosphates other than ATP. The ATP gamma phosphate is transferred to the NDP beta phosphate via a ping-pong mechanism, using a phosphorylated active-site intermediate. In Acinetobacter baylyi (strain ATCC 33305 / BD413 / ADP1), this protein is Nucleoside diphosphate kinase.